Reading from the N-terminus, the 293-residue chain is Acetylglutamate kinase (293 aa).

Residues 70–71, Arg-92, and Asn-186 each bind substrate; that span reads GG.

The protein belongs to the acetylglutamate kinase family. ArgB subfamily.

The protein localises to the cytoplasm. The enzyme catalyses N-acetyl-L-glutamate + ATP = N-acetyl-L-glutamyl 5-phosphate + ADP. The protein operates within amino-acid biosynthesis; L-arginine biosynthesis; N(2)-acetyl-L-ornithine from L-glutamate: step 2/4. In terms of biological role, catalyzes the ATP-dependent phosphorylation of N-acetyl-L-glutamate. The sequence is that of Acetylglutamate kinase from Parasynechococcus marenigrum (strain WH8102).